We begin with the raw amino-acid sequence, 473 residues long: Ribulose bisphosphate carboxylase large chain (473 aa).

Residues Asn-116 and Thr-166 each coordinate substrate. The active-site Proton acceptor is the Lys-168. Substrate is bound at residue Lys-170. Mg(2+) contacts are provided by Lys-194, Asp-196, and Glu-197. Residue Lys-194 is modified to N6-carboxylysine. His-287 (proton acceptor) is an active-site residue. Substrate contacts are provided by Arg-288, His-320, and Ser-372.

Belongs to the RuBisCO large chain family. Type I subfamily. As to quaternary structure, heterohexadecamer of 8 large chains and 8 small chains. Mg(2+) serves as cofactor.

It carries out the reaction 2 (2R)-3-phosphoglycerate + 2 H(+) = D-ribulose 1,5-bisphosphate + CO2 + H2O. It catalyses the reaction D-ribulose 1,5-bisphosphate + O2 = 2-phosphoglycolate + (2R)-3-phosphoglycerate + 2 H(+). Its function is as follows. RuBisCO catalyzes two reactions: the carboxylation of D-ribulose 1,5-bisphosphate, the primary event in carbon dioxide fixation, as well as the oxidative fragmentation of the pentose substrate. Both reactions occur simultaneously and in competition at the same active site. The polypeptide is Ribulose bisphosphate carboxylase large chain (Nitrosomonas europaea (strain ATCC 19718 / CIP 103999 / KCTC 2705 / NBRC 14298)).